The chain runs to 89 residues: Small ribosomal subunit protein uS15 (89 aa).

The interval 1 to 22 (MALEKEEKSQIINNYQLHETDT) is disordered. Over residues 10–22 (QIINNYQLHETDT) the composition is skewed to polar residues.

This sequence belongs to the universal ribosomal protein uS15 family. As to quaternary structure, part of the 30S ribosomal subunit. Forms a bridge to the 50S subunit in the 70S ribosome, contacting the 23S rRNA.

One of the primary rRNA binding proteins, it binds directly to 16S rRNA where it helps nucleate assembly of the platform of the 30S subunit by binding and bridging several RNA helices of the 16S rRNA. Functionally, forms an intersubunit bridge (bridge B4) with the 23S rRNA of the 50S subunit in the ribosome. This Chloroflexus aggregans (strain MD-66 / DSM 9485) protein is Small ribosomal subunit protein uS15.